The chain runs to 635 residues: Threonine--tRNA ligase (635 aa).

Positions 1 to 61 constitute a TGS domain; the sequence is MVSIRLPDGS…DHDVALAIVT (61 aa). The tract at residues 242–533 is catalytic; sequence DHRKLGKQLD…LIEHHAGAMP (292 aa). Positions 333, 384, and 510 each coordinate Zn(2+).

Belongs to the class-II aminoacyl-tRNA synthetase family. As to quaternary structure, homodimer. Requires Zn(2+) as cofactor.

The protein localises to the cytoplasm. The catalysed reaction is tRNA(Thr) + L-threonine + ATP = L-threonyl-tRNA(Thr) + AMP + diphosphate + H(+). In terms of biological role, catalyzes the attachment of threonine to tRNA(Thr) in a two-step reaction: L-threonine is first activated by ATP to form Thr-AMP and then transferred to the acceptor end of tRNA(Thr). Also edits incorrectly charged L-seryl-tRNA(Thr). This is Threonine--tRNA ligase from Paraburkholderia phytofirmans (strain DSM 17436 / LMG 22146 / PsJN) (Burkholderia phytofirmans).